A 690-amino-acid polypeptide reads, in one-letter code: DNA ligase (690 aa).

Residues 49–53 (DAEYD), 98–99 (SL), and glutamate 129 each bind NAD(+). Residue lysine 131 is the N6-AMP-lysine intermediate of the active site. Residues arginine 152, glutamate 191, lysine 308, and lysine 332 each coordinate NAD(+). Zn(2+)-binding residues include cysteine 426, cysteine 429, cysteine 444, and cysteine 450. Residues 607–690 (EDAARLEGLT…ALLREQGIDA (84 aa)) enclose the BRCT domain.

Belongs to the NAD-dependent DNA ligase family. LigA subfamily. Requires Mg(2+) as cofactor. Mn(2+) is required as a cofactor.

The enzyme catalyses NAD(+) + (deoxyribonucleotide)n-3'-hydroxyl + 5'-phospho-(deoxyribonucleotide)m = (deoxyribonucleotide)n+m + AMP + beta-nicotinamide D-nucleotide.. Functionally, DNA ligase that catalyzes the formation of phosphodiester linkages between 5'-phosphoryl and 3'-hydroxyl groups in double-stranded DNA using NAD as a coenzyme and as the energy source for the reaction. It is essential for DNA replication and repair of damaged DNA. The protein is DNA ligase of Salinibacter ruber (strain DSM 13855 / M31).